The following is a 473-amino-acid chain: Major myo-inositol transporter IolT (473 aa).

The next 12 helical transmembrane spans lie at 14–34 (IILV…VLNG), 49–69 (AFTE…GAVF), 83–103 (ILFL…APNV), 111–131 (FVLG…LAEM), 146–166 (LMIV…GTTM), 172–192 (VWRF…FGMI), 256–276 (IVFI…NSIM), 295–315 (IGNI…IWLL), 325–345 (MTGL…SLVL), 350–370 (ALPY…QGAI), 389–409 (LGMG…SFTF), and 411–431 (ILLA…LGIC).

This sequence belongs to the major facilitator superfamily. Sugar transporter (TC 2.A.1.1) family.

It is found in the cell membrane. It participates in polyol metabolism; myo-inositol degradation into acetyl-CoA. Its function is as follows. Major myo-inositol uptake transporter. This Bacillus subtilis (strain 168) protein is Major myo-inositol transporter IolT (iolT).